Reading from the N-terminus, the 205-residue chain is LexA repressor (205 aa).

The H-T-H motif DNA-binding region spans 28–48; sequence IRDIMKHFNFKSPRAAHKHLI. Catalysis depends on for autocatalytic cleavage activity residues serine 125 and lysine 163.

Belongs to the peptidase S24 family. Homodimer.

It catalyses the reaction Hydrolysis of Ala-|-Gly bond in repressor LexA.. Functionally, represses a number of genes involved in the response to DNA damage (SOS response), including recA and lexA. In the presence of single-stranded DNA, RecA interacts with LexA causing an autocatalytic cleavage which disrupts the DNA-binding part of LexA, leading to derepression of the SOS regulon and eventually DNA repair. The polypeptide is LexA repressor (Petrotoga mobilis (strain DSM 10674 / SJ95)).